Consider the following 1859-residue polypeptide: DNA-directed RNA polymerase subunit beta'' (1859 aa).

4 residues coordinate Zn(2+): C286, C359, C366, and C369.

Belongs to the RNA polymerase beta' chain family. RpoC2 subfamily. In plastids the minimal PEP RNA polymerase catalytic core is composed of four subunits: alpha, beta, beta', and beta''. When a (nuclear-encoded) sigma factor is associated with the core the holoenzyme is formed, which can initiate transcription. Requires Zn(2+) as cofactor.

It is found in the plastid. It localises to the chloroplast. It catalyses the reaction RNA(n) + a ribonucleoside 5'-triphosphate = RNA(n+1) + diphosphate. Its function is as follows. DNA-dependent RNA polymerase catalyzes the transcription of DNA into RNA using the four ribonucleoside triphosphates as substrates. This chain is DNA-directed RNA polymerase subunit beta'', found in Oltmannsiellopsis viridis (Marine flagellate).